Here is a 369-residue protein sequence, read N- to C-terminus: Somatostatin receptor type 2 (369 aa).

The Extracellular segment spans residues 1–43 (MEMSSEQLNGSQVWVSSPFDLNGSLGPSNGSNQTEPYYDMTSN). N-linked (GlcNAc...) asparagine glycans are attached at residues Asn-9, Asn-22, Asn-29, and Asn-32. The chain crosses the membrane as a helical span at residues 44–67 (AVLTFIYFVVCVVGLCGNTLVIYV). Residues 68 to 78 (ILRYAKMKTIT) lie on the Cytoplasmic side of the membrane. A helical transmembrane segment spans residues 79-103 (NIYILNLAIADELFMLGLPFLAMQV). At 104–118 (ALVHWPFGKAICRVV) the chain is on the extracellular side. Cysteines 115 and 193 form a disulfide. The chain crosses the membrane as a helical span at residues 119–138 (MTVDGINQFTSIFCLTVMSI). Residues 139-161 (DRYLAVVHPIKSAKWRRPRTAKM) are Cytoplasmic-facing. A helical transmembrane segment spans residues 162 to 181 (INVAVWCVSLLVILPIMIYA). Over 182–207 (GLRSNQWGRSSCTINWPGESGAWYTG) the chain is Extracellular. Residues 208 to 229 (FIIYAFILGFLVPLTIICLCYL) traverse the membrane as a helical segment. Over 230–253 (FIIIKVKSSGIRVGSSKRKKSEKK) the chain is Cytoplasmic. The helical transmembrane segment at 254–278 (VTRMVSIVVAVFIFCWLPFYIFNVS) threads the bilayer. Over 279–288 (SVSVAISPTP) the chain is Extracellular. The chain crosses the membrane as a helical span at residues 289 to 303 (ALKGMFDFVVILTYA). The Cytoplasmic segment spans residues 304-369 (NSCANPILYA…LLNGDLQTSI (66 aa)). Cys-328 carries the S-palmitoyl cysteine lipid modification. Residues Ser-341, Ser-343, and Ser-348 each carry the phosphoserine modification. A phosphothreonine mark is found at Thr-353 and Thr-354.

Belongs to the G-protein coupled receptor 1 family. As to quaternary structure, homodimer and heterodimer with SSTR3 and SSTR5. Heterodimerization with SSTR3 inactivates SSTR3 receptor function. Heterodimerization with SSTR5 is enhanced by agonist stimulation of SSTR2 and increases SSTR2 cell growth inhibition activity. Following agonist stimulation, homodimers dissociate into monomers which is required for receptor internalization. Interacts with beta-arrestin; this interaction is necessary for receptor internalization and is destabilized by heterodimerization with SSTR5 which results in increased recycling of SSTR2 to the cell surface. Interacts (via C-terminus) with SHANK1 (via PDZ domain). Post-translationally, phosphorylated on serine and threonine residues in response to agonist stimulation, leading to receptor desensitization and rapid internalization. Phosphorylated to a greater extent on serine than threonine residues. Threonine phosphorylation is required for arrestin binding and receptor endocytosis but is not necessary for desensitization. In terms of tissue distribution, cerebrum and kidney.

It localises to the cell membrane. It is found in the cytoplasm. Functionally, receptor for somatostatin-14 and -28. This receptor is coupled via pertussis toxin sensitive G proteins to inhibition of adenylyl cyclase. In addition it stimulates phosphotyrosine phosphatase and PLC via pertussis toxin insensitive as well as sensitive G proteins. Inhibits calcium entry by suppressing voltage-dependent calcium channels. Acts as the functionally dominant somatostatin receptor in pancreatic alpha- and beta-cells where it mediates the inhibitory effect of somatostatin-14 on hormone secretion. Inhibits cell growth through enhancement of MAPK1 and MAPK2 phosphorylation and subsequent up-regulation of CDKN1B. Stimulates neuronal migration and axon outgrowth and may participate in neuron development and maturation during brain development. Mediates negative regulation of insulin receptor signaling through PTPN6. Inactivates SSTR3 receptor function following heterodimerization. This chain is Somatostatin receptor type 2 (Sstr2), found in Mus musculus (Mouse).